Consider the following 459-residue polypeptide: Glycosyl hydrolase family 109 protein (459 aa).

The segment at residues 1–31 (MHNIHRRHFLKAAGAVTAGLITANITASTHA) is a signal peptide (tat-type signal). NAD(+) is bound by residues 64 to 65 (ER), Asp86, 135 to 138 (WEWH), 155 to 156 (EV), and Asn184. Residues Tyr213, Arg232, 244–247 (YPTH), and Tyr326 contribute to the substrate site. Residue Tyr244 participates in NAD(+) binding.

It belongs to the Gfo/Idh/MocA family. Glycosyl hydrolase 109 subfamily. Requires NAD(+) as cofactor. Predicted to be exported by the Tat system. The position of the signal peptide cleavage has not been experimentally proven.

In terms of biological role, glycosidase. The sequence is that of Glycosyl hydrolase family 109 protein from Shewanella putrefaciens (strain CN-32 / ATCC BAA-453).